The following is a 466-amino-acid chain: 3-isopropylmalate dehydratase large subunit (466 aa).

C347, C407, and C410 together coordinate [4Fe-4S] cluster.

This sequence belongs to the aconitase/IPM isomerase family. LeuC type 1 subfamily. As to quaternary structure, heterodimer of LeuC and LeuD. [4Fe-4S] cluster serves as cofactor.

It catalyses the reaction (2R,3S)-3-isopropylmalate = (2S)-2-isopropylmalate. The protein operates within amino-acid biosynthesis; L-leucine biosynthesis; L-leucine from 3-methyl-2-oxobutanoate: step 2/4. Catalyzes the isomerization between 2-isopropylmalate and 3-isopropylmalate, via the formation of 2-isopropylmaleate. This Blochmanniella pennsylvanica (strain BPEN) protein is 3-isopropylmalate dehydratase large subunit.